We begin with the raw amino-acid sequence, 87 residues long: Toxin Cll3 (87 aa).

An N-terminal signal peptide occupies residues 1-19; that stretch reads MNSLLMITACLAVIGTVWA. The LCN-type CS-alpha/beta domain occupies 20-85; it reads KEGYIVNYYD…VWPLPNKTCY (66 aa). Cystine bridges form between Cys31-Cys84, Cys35-Cys60, Cys44-Cys65, and Cys48-Cys67. Tyr85 carries the tyrosine amide modification.

This sequence belongs to the long (4 C-C) scorpion toxin superfamily. Sodium channel inhibitor family. Beta subfamily. In terms of tissue distribution, expressed by the venom gland.

It is found in the secreted. Beta toxins bind voltage-independently at site-4 of sodium channels (Nav) and shift the voltage of activation toward more negative potentials thereby affecting sodium channel activation and promoting spontaneous and repetitive firing. This Centruroides limpidus (Mexican scorpion) protein is Toxin Cll3.